Consider the following 125-residue polypeptide: UPF0231 protein in hemN 3'region (125 aa).

The protein belongs to the UPF0231 family.

The protein is UPF0231 protein in hemN 3'region of Mannheimia haemolytica (Pasteurella haemolytica).